A 145-amino-acid chain; its full sequence is Neutral phospholipase A2 homolog taipoxin beta chain 1 (145 aa).

Positions Met-1 to Leu-27 are cleaved as a signal peptide. 7 disulfides stabilise this stretch: Cys-38/Cys-98, Cys-54/Cys-144, Cys-56/Cys-72, Cys-71/Cys-125, Cys-78/Cys-118, Cys-87/Cys-111, and Cys-105/Cys-116.

It belongs to the phospholipase A2 family. Group I subfamily. D49 sub-subfamily. Heterotrimer of alpha, beta, and gamma chains; non-covalently linked. Expressed by the venom gland.

It is found in the secreted. Functionally, heterotrimer: Snake venom phospholipase A2 (PLA2) heterotrimer that acts as a potent presynaptic neurotoxin by blocking synaptic transmission and synaptic vesicle recycling. May act by binding in a calcium-dependent fashion to neurotonal pentraxin-1 (NPTX1) and neurotonal pentraxin-2 (NPTX2), but not to neuronal pentraxin receptor (NPTXR). Also binds to taipoxin-associated calcium binding protein 49 (RCN2), a protein localized in the lumen of endoplasmic reticulum. Monomer (beta chain): Snake venom phospholipase A2 homolog that is neither toxic nor enzymatically active. Does not bind calcium. This Oxyuranus scutellatus scutellatus (Australian taipan) protein is Neutral phospholipase A2 homolog taipoxin beta chain 1.